Consider the following 20-residue polypeptide: Unknown protein NF003 from 2D-PAGE (20 aa).

The chain is Unknown protein NF003 from 2D-PAGE from Naegleria fowleri (Brain eating amoeba).